The primary structure comprises 349 residues: Fe(3+) ions import ATP-binding protein FbpC (349 aa).

The 233-residue stretch at 4–236 (LELHHIGKSY…PVDEPTATFL (233 aa)) folds into the ABC transporter domain. Residue 36-43 (GPSGSGKT) coordinates ATP.

It belongs to the ABC transporter superfamily. Fe(3+) ion importer (TC 3.A.1.10) family. The complex is composed of two ATP-binding proteins (FbpC), two transmembrane proteins (FbpB) and a solute-binding protein (FbpA).

Its subcellular location is the cell inner membrane. The catalysed reaction is Fe(3+)(out) + ATP + H2O = Fe(3+)(in) + ADP + phosphate + H(+). Part of the ABC transporter complex FbpABC involved in Fe(3+) ions import. Responsible for energy coupling to the transport system. The sequence is that of Fe(3+) ions import ATP-binding protein FbpC from Yersinia pestis bv. Antiqua (strain Antiqua).